The following is a 247-amino-acid chain: 2,3-bisphosphoglycerate-dependent phosphoglycerate mutase (247 aa).

Residues 8-15 (RHGESTWN), 21-22 (TG), arginine 60, 87-90 (ERHY), lysine 98, 114-115 (RR), and 183-184 (GN) each bind substrate. Histidine 9 serves as the catalytic Tele-phosphohistidine intermediate. Glutamate 87 functions as the Proton donor/acceptor in the catalytic mechanism.

This sequence belongs to the phosphoglycerate mutase family. BPG-dependent PGAM subfamily. Homodimer.

The enzyme catalyses (2R)-2-phosphoglycerate = (2R)-3-phosphoglycerate. The protein operates within carbohydrate degradation; glycolysis; pyruvate from D-glyceraldehyde 3-phosphate: step 3/5. Catalyzes the interconversion of 2-phosphoglycerate and 3-phosphoglycerate. The sequence is that of 2,3-bisphosphoglycerate-dependent phosphoglycerate mutase from Methylibium petroleiphilum (strain ATCC BAA-1232 / LMG 22953 / PM1).